A 324-amino-acid polypeptide reads, in one-letter code: Malate dehydrogenase (324 aa).

Residues 20-25 (GAGNVG) and Asp44 contribute to the NAD(+) site. Positions 93 and 99 each coordinate substrate. Residues Asn106 and 129–131 (VTN) contribute to the NAD(+) site. 2 residues coordinate substrate: Asn131 and Arg162. The Proton acceptor role is filled by His186.

Belongs to the LDH/MDH superfamily. MDH type 3 family.

It catalyses the reaction (S)-malate + NAD(+) = oxaloacetate + NADH + H(+). Functionally, catalyzes the reversible oxidation of malate to oxaloacetate. This Synechocystis sp. (strain ATCC 27184 / PCC 6803 / Kazusa) protein is Malate dehydrogenase.